The sequence spans 569 residues: MGVVRVQHETKMENQSWLKKLARRLGPGHVVNLCFIVVLLFSTLLTWREVVVLEDAYISSQRNHLENVANALDKHLQYNVDKLIFLRNGMREALVAPLDFTSLRNAVTEFEQHRDEHAWQIELNRRRTLSVNGVSDALVSEGNLLSRENESLDNEITAALEVGYLLRLAHNTSSMVEQAMYVSRAGFYVSTQPTLFTRNVPTRYYGYVTQPWFIGHSQRENRHRAVRWFTSQPEHASNTEPQVTVSVPVDSNNYWYGVLGMSIPVRTMQQFLRNAIDKNLDGEYQLYDSKLRFLTSSNPDHPTGNIFDPRELALLAQAMEHDTRGGIRMDSRYVSWERLDHFDGVLVRVHTLSEGVRGDFGSISIALTLLWALFTTMLLISWYVIRRMVSNMYVLQSSLQWQAWHDTLTRLYNRGALFEKARPLAKLCQTHQHPFSVIQVDLDHFKAINDRFGHQAGDRVLSHAAGLISSSLRAQDVAGRVGGEEFCVILPGASLTEAAEVAERIRLKLNEKEMLIAKSTTIRISASLGVSSSEETGDYDFEQLQSLADRRLYLAKQAGRNRVCASDNA.

Transmembrane regions (helical) follow at residues 25–45 (LGPG…STLL) and 365–385 (IALT…WYVI). Positions 433–568 (HPFSVIQVDL…GRNRVCASDN (136 aa)) constitute a GGDEF domain. Residue D441 coordinates Mg(2+). N449, H454, and D458 together coordinate substrate. E484 contacts Mg(2+). Catalysis depends on E484, which acts as the Proton acceptor.

Homodimer. Mg(2+) serves as cofactor.

It localises to the cell inner membrane. It carries out the reaction 2 GTP = 3',3'-c-di-GMP + 2 diphosphate. The protein operates within glycan metabolism; bacterial cellulose biosynthesis. It functions in the pathway purine metabolism; 3',5'-cyclic di-GMP biosynthesis. Its function is as follows. Catalyzes the synthesis of cyclic-di-GMP (c-di-GMP) via the condensation of 2 GTP molecules. Cyclic-di-GMP is a second messenger which controls cell surface-associated traits in bacteria. Involved in the regulation of cellulose production. The chain is Probable diguanylate cyclase DgcQ from Shigella sonnei (strain Ss046).